We begin with the raw amino-acid sequence, 809 residues long: Glutamine--tRNA ligase (809 aa).

The span at 185 to 198 (DLIKKKTKNNEKKK) shows a compositional bias: basic and acidic residues. Residues 185–216 (DLIKKKTKNNEKKKTNSAKKSSDNSASSGPKR) are disordered. Positions 258–268 (PEPNGYLHIGH) match the 'HIGH' region motif. Residues 259 to 261 (EPN) and 265 to 271 (HIGHSKA) contribute to the ATP site. Residue Asp-291 participates in L-glutamine binding. Phosphoserine is present on Ser-378. Tyr-440 contacts L-glutamine. ATP is bound by residues Thr-459, 488–489 (RL), and 496–498 (LSK). The short motif at 495–499 (VLSKR) is the 'KMSKS' region element.

This sequence belongs to the class-I aminoacyl-tRNA synthetase family.

It catalyses the reaction tRNA(Gln) + L-glutamine + ATP = L-glutaminyl-tRNA(Gln) + AMP + diphosphate. The protein is Glutamine--tRNA ligase (GLN4) of Saccharomyces cerevisiae (strain ATCC 204508 / S288c) (Baker's yeast).